A 101-amino-acid polypeptide reads, in one-letter code: ATP-dependent Clp protease adapter protein ClpS (101 aa).

The protein belongs to the ClpS family. In terms of assembly, binds to the N-terminal domain of the chaperone ClpA.

Involved in the modulation of the specificity of the ClpAP-mediated ATP-dependent protein degradation. The chain is ATP-dependent Clp protease adapter protein ClpS from Mycobacterium bovis (strain ATCC BAA-935 / AF2122/97).